Consider the following 232-residue polypeptide: Orotidine 5'-phosphate decarboxylase (232 aa).

Residues Asp13, Lys35, 62 to 71 (DLKFHDIPNT), Thr122, Arg182, Gln191, Gly211, and Arg212 each bind substrate. Residue Lys64 is the Proton donor of the active site.

The protein belongs to the OMP decarboxylase family. Type 1 subfamily. In terms of assembly, homodimer.

It catalyses the reaction orotidine 5'-phosphate + H(+) = UMP + CO2. Its pathway is pyrimidine metabolism; UMP biosynthesis via de novo pathway; UMP from orotate: step 2/2. In terms of biological role, catalyzes the decarboxylation of orotidine 5'-monophosphate (OMP) to uridine 5'-monophosphate (UMP). The protein is Orotidine 5'-phosphate decarboxylase of Pseudomonas syringae pv. tomato (strain ATCC BAA-871 / DC3000).